A 145-amino-acid chain; its full sequence is 3-dehydroquinate dehydratase (145 aa).

The active-site Proton acceptor is the Y23. Substrate is bound by residues N75, H81, and D88. H101 acts as the Proton donor in catalysis. Substrate is bound by residues 102-103 and R112; that span reads IS.

It belongs to the type-II 3-dehydroquinase family. In terms of assembly, homododecamer.

The catalysed reaction is 3-dehydroquinate = 3-dehydroshikimate + H2O. It participates in metabolic intermediate biosynthesis; chorismate biosynthesis; chorismate from D-erythrose 4-phosphate and phosphoenolpyruvate: step 3/7. Its function is as follows. Catalyzes a trans-dehydration via an enolate intermediate. This chain is 3-dehydroquinate dehydratase, found in Caldicellulosiruptor saccharolyticus (strain ATCC 43494 / DSM 8903 / Tp8T 6331).